The following is a 197-amino-acid chain: Peptide deformylase (197 aa).

The Fe cation site is built by C106 and H148. Residue E149 is part of the active site. Residue H152 participates in Fe cation binding.

This sequence belongs to the polypeptide deformylase family. It depends on Fe(2+) as a cofactor.

It catalyses the reaction N-terminal N-formyl-L-methionyl-[peptide] + H2O = N-terminal L-methionyl-[peptide] + formate. In terms of biological role, removes the formyl group from the N-terminal Met of newly synthesized proteins. Requires at least a dipeptide for an efficient rate of reaction. N-terminal L-methionine is a prerequisite for activity but the enzyme has broad specificity at other positions. The polypeptide is Peptide deformylase (Mycobacterium tuberculosis (strain ATCC 25177 / H37Ra)).